The primary structure comprises 288 residues: Bis(5'-nucleosyl)-tetraphosphatase, symmetrical (288 aa).

The protein belongs to the Ap4A hydrolase family.

The enzyme catalyses P(1),P(4)-bis(5'-adenosyl) tetraphosphate + H2O = 2 ADP + 2 H(+). Hydrolyzes diadenosine 5',5'''-P1,P4-tetraphosphate to yield ADP. The protein is Bis(5'-nucleosyl)-tetraphosphatase, symmetrical of Baumannia cicadellinicola subsp. Homalodisca coagulata.